Reading from the N-terminus, the 473-residue chain is Arginine biosynthesis bifunctional protein ArgJ, mitochondrial (473 aa).

Residues Thr201, Lys230, Thr241, Glu328, Asn468, and Thr473 each contribute to the substrate site. Catalysis depends on Thr241, which acts as the Nucleophile.

It belongs to the ArgJ family. As to quaternary structure, heterodimer of an alpha and a beta chain. The alpha and beta chains are autoproteolytically processed from a single precursor protein within the mitochondrion.

The protein resides in the mitochondrion matrix. It carries out the reaction N(2)-acetyl-L-ornithine + L-glutamate = N-acetyl-L-glutamate + L-ornithine. The catalysed reaction is L-glutamate + acetyl-CoA = N-acetyl-L-glutamate + CoA + H(+). It functions in the pathway amino-acid biosynthesis; L-arginine biosynthesis; L-ornithine and N-acetyl-L-glutamate from L-glutamate and N(2)-acetyl-L-ornithine (cyclic): step 1/1. It participates in amino-acid biosynthesis; L-arginine biosynthesis; N(2)-acetyl-L-ornithine from L-glutamate: step 1/4. Its function is as follows. Catalyzes two activities which are involved in the cyclic version of arginine biosynthesis: the synthesis of acetylglutamate from glutamate and acetyl-CoA, and of ornithine by transacetylation between acetylornithine and glutamate. In Paracoccidioides lutzii (strain ATCC MYA-826 / Pb01) (Paracoccidioides brasiliensis), this protein is Arginine biosynthesis bifunctional protein ArgJ, mitochondrial.